The following is a 598-amino-acid chain: UvrABC system protein C (598 aa).

In terms of domain architecture, GIY-YIG spans 14–91 (DSPGCYLHKD…IQKNMPKYNI (78 aa)). The 36-residue stretch at 196-231 (DKIIEDLRSKMLAASKEMAFERAAEYRDLISGIATM) folds into the UVR domain.

It belongs to the UvrC family. In terms of assembly, interacts with UvrB in an incision complex.

Its subcellular location is the cytoplasm. The UvrABC repair system catalyzes the recognition and processing of DNA lesions. UvrC both incises the 5' and 3' sides of the lesion. The N-terminal half is responsible for the 3' incision and the C-terminal half is responsible for the 5' incision. The sequence is that of UvrABC system protein C from Streptococcus pyogenes serotype M1.